The primary structure comprises 82 residues: uncharacterized protein (82 aa).

2 consecutive transmembrane segments (helical) span residues 8 to 28 (LLSA…LPAP) and 50 to 70 (LYTV…YLVL).

It localises to the cell membrane. This is an uncharacterized protein from Klebsiella pneumoniae.